The primary structure comprises 476 residues: Homeobox even-skipped homolog protein 2 (476 aa).

Disordered stretches follow at residues 82–113 (TGSE…AEAD) and 142–185 (KGYA…GSGA). 2 stretches are compositionally biased toward low complexity: residues 84-96 (SEST…SSAA) and 147-159 (SGSA…SASG). Over residues 160 to 183 (SGLGSLHGGSGGSGGSAALGGSGS) the composition is skewed to gly residues. Residues 188-247 (VRRYRTAFTREQIARLEKEFYRENYVSRPRRCELAAALNLPETTIKVWFQNRRMKDKRQR) constitute a DNA-binding region (homeobox).

It belongs to the even-skipped homeobox family.

The protein resides in the nucleus. This chain is Homeobox even-skipped homolog protein 2 (EVX2), found in Homo sapiens (Human).